The chain runs to 264 residues: Thymidylate synthase (264 aa).

DUMP is bound by residues R21 and 126–127 (RR). C146 (nucleophile) is an active-site residue. Residues 166 to 169 (RSAD), N177, and 207 to 209 (HLY) contribute to the dUMP site. Position 169 (D169) interacts with (6R)-5,10-methylene-5,6,7,8-tetrahydrofolate. A (6R)-5,10-methylene-5,6,7,8-tetrahydrofolate-binding site is contributed by A263.

The protein belongs to the thymidylate synthase family. Bacterial-type ThyA subfamily. In terms of assembly, homodimer.

It is found in the cytoplasm. It carries out the reaction dUMP + (6R)-5,10-methylene-5,6,7,8-tetrahydrofolate = 7,8-dihydrofolate + dTMP. It participates in pyrimidine metabolism; dTTP biosynthesis. Catalyzes the reductive methylation of 2'-deoxyuridine-5'-monophosphate (dUMP) to 2'-deoxythymidine-5'-monophosphate (dTMP) while utilizing 5,10-methylenetetrahydrofolate (mTHF) as the methyl donor and reductant in the reaction, yielding dihydrofolate (DHF) as a by-product. This enzymatic reaction provides an intracellular de novo source of dTMP, an essential precursor for DNA biosynthesis. This chain is Thymidylate synthase, found in Bradyrhizobium sp. (strain ORS 278).